Reading from the N-terminus, the 676-residue chain is Putative Xaa-Pro dipeptidyl-peptidase (676 aa).

Catalysis depends on charge relay system residues Ser224, Asp330, and His361. The disordered stretch occupies residues 423 to 450 (RPGTGTQAGVGTLGLRTGSGTETFTDDP).

It belongs to the peptidase S15 family.

It catalyses the reaction Hydrolyzes Xaa-Pro-|- bonds to release unblocked, N-terminal dipeptides from substrates including Ala-Pro-|-p-nitroanilide and (sequentially) Tyr-Pro-|-Phe-Pro-|-Gly-Pro-|-Ile.. The protein is Putative Xaa-Pro dipeptidyl-peptidase of Streptomyces avermitilis (strain ATCC 31267 / DSM 46492 / JCM 5070 / NBRC 14893 / NCIMB 12804 / NRRL 8165 / MA-4680).